Consider the following 665-residue polypeptide: tRNA 5-methylaminomethyl-2-thiouridine biosynthesis bifunctional protein MnmC (665 aa).

The tRNA (mnm(5)s(2)U34)-methyltransferase stretch occupies residues 1–243; that stretch reads MSQTSLHHAR…KWAMLAGERV (243 aa). Positions 268-665 are FAD-dependent cmnm(5)s(2)U34 oxidoreductase; sequence IGGGIASAMT…RKLLKGKPLN (398 aa).

In the N-terminal section; belongs to the methyltransferase superfamily. tRNA (mnm(5)s(2)U34)-methyltransferase family. The protein in the C-terminal section; belongs to the DAO family. The cofactor is FAD.

It localises to the cytoplasm. The catalysed reaction is 5-aminomethyl-2-thiouridine(34) in tRNA + S-adenosyl-L-methionine = 5-methylaminomethyl-2-thiouridine(34) in tRNA + S-adenosyl-L-homocysteine + H(+). Functionally, catalyzes the last two steps in the biosynthesis of 5-methylaminomethyl-2-thiouridine (mnm(5)s(2)U) at the wobble position (U34) in tRNA. Catalyzes the FAD-dependent demodification of cmnm(5)s(2)U34 to nm(5)s(2)U34, followed by the transfer of a methyl group from S-adenosyl-L-methionine to nm(5)s(2)U34, to form mnm(5)s(2)U34. The chain is tRNA 5-methylaminomethyl-2-thiouridine biosynthesis bifunctional protein MnmC from Aeromonas salmonicida (strain A449).